The following is a 90-amino-acid chain: Molybdopterin synthase sulfur carrier subunit (90 aa).

A 1-thioglycine; alternate modification is found at G90. G90 carries the post-translational modification Glycyl adenylate; alternate.

Belongs to the MoaD family. MOCS2A subfamily. Heterotetramer; composed of 2 small (Mocs2A) and 2 large (Mocs2B) subunits. In terms of processing, C-terminal thiocarboxylation occurs in 2 steps, it is first acyl-adenylated (-COAMP) via the hesA/moeB/thiF part of MOCS3, then thiocarboxylated (-COSH) via the rhodanese domain of MOCS3.

The protein resides in the cytoplasm. It participates in cofactor biosynthesis; molybdopterin biosynthesis. Acts as a sulfur carrier required for molybdopterin biosynthesis. Component of the molybdopterin synthase complex that catalyzes the conversion of precursor Z into molybdopterin by mediating the incorporation of 2 sulfur atoms into precursor Z to generate a dithiolene group. In the complex, serves as sulfur donor by being thiocarboxylated (-COSH) at its C-terminus by MOCS3. After interaction with Mocs2B, the sulfur is then transferred to precursor Z to form molybdopterin. The protein is Molybdopterin synthase sulfur carrier subunit of Drosophila erecta (Fruit fly).